The chain runs to 288 residues: Syntaxin-1B (288 aa).

Basic and acidic residues predominate over residues 1–13 (MKDRTQELRSAKD). The tract at residues 1–20 (MKDRTQELRSAKDSDDEEEV) is disordered. Residues 1-264 (MKDRTQELRS…KYQSKARRKK (264 aa)) are Cytoplasmic-facing. 2 positions are modified to phosphoserine: Ser-10 and Ser-14. Residues 29-104 (MDEFFEQVEE…IEQSIEQEEG (76 aa)) adopt a coiled-coil conformation. The t-SNARE coiled-coil homology domain maps to 191 to 253 (LNEIETRHNE…ERAVSDTKKA (63 aa)). A helical; Anchor for type IV membrane protein membrane pass occupies residues 265-288 (IMIIICCVVLGVVLASSIGGTLGL).

It belongs to the syntaxin family. As to quaternary structure, interacts with OTOF. Interacts with SYT6 and SYT8; the interaction is Ca(2+)-dependent. In terms of processing, phosphorylated by CK2. (Microbial infection) Targeted and hydrolyzed by C.botulinum neurotoxin type C (BoNT/C); cleavage by BoNT/C inhibits neurotransmitter release. Probably hydrolyzes the 252-Lys-|-Ala-253 bond.

The protein resides in the membrane. In terms of biological role, potentially involved in docking of synaptic vesicles at presynaptic active zones. May mediate Ca(2+)-regulation of exocytosis acrosomal reaction in sperm. The sequence is that of Syntaxin-1B (STX1B) from Bos taurus (Bovine).